The sequence spans 332 residues: 2,3-diketo-L-gulonate reductase (332 aa).

Residue histidine 44 is the Proton donor of the active site. Residues 168–174 (ITMVDMS), 224–225 (WK), and 304–306 (GHE) contribute to the NAD(+) site.

The protein belongs to the LDH2/MDH2 oxidoreductase family. DlgD subfamily. As to quaternary structure, homodimer.

It localises to the cytoplasm. The enzyme catalyses 3-dehydro-L-gulonate + NAD(+) = 2,3-dioxo-L-gulonate + NADH + H(+). It catalyses the reaction 3-dehydro-L-gulonate + NADP(+) = 2,3-dioxo-L-gulonate + NADPH + H(+). In terms of biological role, catalyzes the reduction of 2,3-diketo-L-gulonate in the presence of NADH, to form 3-keto-L-gulonate. This is 2,3-diketo-L-gulonate reductase from Salmonella newport (strain SL254).